We begin with the raw amino-acid sequence, 153 residues long: Arginine repressor (153 aa).

Belongs to the ArgR family.

The protein resides in the cytoplasm. Its pathway is amino-acid biosynthesis; L-arginine biosynthesis [regulation]. Its function is as follows. Regulates arginine biosynthesis genes. In Actinobacillus pleuropneumoniae serotype 3 (strain JL03), this protein is Arginine repressor.